A 231-amino-acid polypeptide reads, in one-letter code: Flagellar L-ring protein (231 aa).

The first 18 residues, methionine 1 to glycine 18, serve as a signal peptide directing secretion. Cysteine 19 carries the N-palmitoyl cysteine lipid modification. Cysteine 19 carries the S-diacylglycerol cysteine lipid modification.

It belongs to the FlgH family. In terms of assembly, the basal body constitutes a major portion of the flagellar organelle and consists of four rings (L,P,S, and M) mounted on a central rod.

The protein localises to the cell outer membrane. It localises to the bacterial flagellum basal body. In terms of biological role, assembles around the rod to form the L-ring and probably protects the motor/basal body from shearing forces during rotation. This is Flagellar L-ring protein from Stutzerimonas stutzeri (strain A1501) (Pseudomonas stutzeri).